The primary structure comprises 142 residues: Transcriptional regulator MraZ (142 aa).

SpoVT-AbrB domains are found at residues 5–47 and 76–119; these read EFQH…PQHE and ATEC…SKEE.

This sequence belongs to the MraZ family. In terms of assembly, forms oligomers.

Its subcellular location is the cytoplasm. It localises to the nucleoid. This is Transcriptional regulator MraZ from Desulforamulus reducens (strain ATCC BAA-1160 / DSM 100696 / MI-1) (Desulfotomaculum reducens).